Here is a 201-residue protein sequence, read N- to C-terminus: MHNILEVIYWNKCSYERKKKILSRPIISNRFLIRNKVKEIISNVKSFGDRALYNYTNVFDNINLKNIRVSEEDIVSSHLHVSKELKLAVEVAFKNIKKFHSKQNVGSFNLKVQDNIYCQQIIRPIESIGLYIPNGSAPLLSTVLMLAIPANIAGCKRIMLCSPPPIMNEILYACKICEIKDVFQIGGAQAIAALGCGTETI.

The protein belongs to the histidinol dehydrogenase family. In terms of assembly, homodimer. The cofactor is Zn(2+).

The catalysed reaction is L-histidinol + 2 NAD(+) + H2O = L-histidine + 2 NADH + 3 H(+). Its pathway is amino-acid biosynthesis; L-histidine biosynthesis; L-histidine from 5-phospho-alpha-D-ribose 1-diphosphate: step 9/9. Catalyzes the sequential NAD-dependent oxidations of L-histidinol to L-histidinaldehyde and then to L-histidine. This is Histidinol dehydrogenase (hisD) from Buchnera aphidicola subsp. Schlechtendalia chinensis.